A 799-amino-acid chain; its full sequence is Signal transducer and activator of transcription 5A (799 aa).

The residue at position 90 (Y90) is a Phosphotyrosine. At S128 the chain carries Phosphoserine. The region spanning 589-686 (WNDGAILGFV…EVFSKYYTPV (98 aa)) is the SH2 domain. Residue Y682 is modified to Phosphotyrosine. Y699 is modified (phosphotyrosine; by JAK2). The interval 778-799 (DSLDPRLSPPAGLFASTRGSLS) is disordered. A Phosphoserine modification is found at S785.

The protein belongs to the transcription factor STAT family. In terms of assembly, forms a homodimer or a heterodimer with a related family member. Binds NR3C1. Interacts with NCOA1 and SOCS7. Interacts with ERBB4. Interacts with EBF4. Interacts with CD69. ISGylated. Post-translationally, tyrosine phosphorylated in response to KITLG/SCF, IL2, IL3, IL7, IL15, CSF2/GMCSF, GH1, PRL, EPO and THPO. Activated KIT promotes phosphorylation on tyrosine residues and subsequent translocation to the nucleus. Tyrosine phosphorylated in response to constitutively activated FGFR1, FGFR2, FGFR3 and FGFR4. Tyrosine phosphorylation is required for DNA-binding activity and dimerization. Serine phosphorylation is also required for maximal transcriptional activity. Tyrosine phosphorylated in response to signaling via activated FLT3; wild-type FLT3 results in much weaker phosphorylation than constitutively activated mutant FLT3. Alternatively, can be phosphorylated by JAK2 at Tyr-699.

It localises to the cytoplasm. Its subcellular location is the nucleus. Functionally, carries out a dual function: signal transduction and activation of transcription. Mediates cellular responses to the cytokine KITLG/SCF and other growth factors. May mediate cellular responses to activated FGFR1, FGFR2, FGFR3 and FGFR4. Binds to the GAS element and activates PRL-induced transcription. Regulates the expression of milk proteins during lactation. This is Signal transducer and activator of transcription 5A (STAT5A) from Sus scrofa (Pig).